The chain runs to 211 residues: Scoloptoxin SSD43 (211 aa).

The signal sequence occupies residues methionine 1–glycine 20.

Contains 3 disulfide bonds. In terms of tissue distribution, expressed by the venom gland.

Its subcellular location is the secreted. Shows trypsin inhibiting activity. The protein is highly thermally stable, since its incubation in boiling water during 10 minutes does not reduce its activity. The polypeptide is Scoloptoxin SSD43 (Scolopendra dehaani (Thai centipede)).